A 337-amino-acid polypeptide reads, in one-letter code: Tetraacyldisaccharide 4'-kinase (337 aa).

Residue Thr52–Thr59 coordinates ATP.

This sequence belongs to the LpxK family.

It catalyses the reaction a lipid A disaccharide + ATP = a lipid IVA + ADP + H(+). It functions in the pathway glycolipid biosynthesis; lipid IV(A) biosynthesis; lipid IV(A) from (3R)-3-hydroxytetradecanoyl-[acyl-carrier-protein] and UDP-N-acetyl-alpha-D-glucosamine: step 6/6. Its function is as follows. Transfers the gamma-phosphate of ATP to the 4'-position of a tetraacyldisaccharide 1-phosphate intermediate (termed DS-1-P) to form tetraacyldisaccharide 1,4'-bis-phosphate (lipid IVA). The polypeptide is Tetraacyldisaccharide 4'-kinase (Methylobacterium nodulans (strain LMG 21967 / CNCM I-2342 / ORS 2060)).